The chain runs to 111 residues: Photosystem II reaction center Psb28 protein (111 aa).

This sequence belongs to the Psb28 family. Part of the photosystem II complex.

The protein localises to the cellular thylakoid membrane. This Nostoc sp. (strain PCC 7120 / SAG 25.82 / UTEX 2576) protein is Photosystem II reaction center Psb28 protein.